The sequence spans 137 residues: Small ribosomal subunit protein uS9 (137 aa).

Residues 100 to 137 form a disordered region; it reads ENRPPLKSEGYLTRDPRAKERKKYGLHKARKAPQYSKR. Residues 118–137 are compositionally biased toward basic residues; sequence KERKKYGLHKARKAPQYSKR.

It belongs to the universal ribosomal protein uS9 family.

In Microcystis aeruginosa (strain NIES-843 / IAM M-2473), this protein is Small ribosomal subunit protein uS9.